The chain runs to 331 residues: MAKWGQGDPRWIVEEREDGTNVNNWHWTERDATIWSKGKLRELLVGIAMENEAGRCEISELKQVEGEASCNSRKGKLIFFYEWNIKLAWKGTVKESGAKHKGLIEIPSLSEENEINDTEVNVSKKKGDGEILKDLMRTTGTAKVREALGEYLKALKTEFTTGMILPTKAVATQELTLQRKLNENKLQASPVALGVRIPTVALHLTELFDTTVEQLYSIFTVKELVQKFSKSPAVLEAERGGKFQMFDGNISGEYVELVTNRKIIMKWRCRNWPEEHYATVELNFVPAPGQTELQLDCKGVPVCKEENMKFCWQKQHFEEIKGLLELTAQNA.

This sequence belongs to the AHA1 family.

Its function is as follows. Co-chaperone that stimulates HSP90 ATPase activity. The sequence is that of Activator of 90 kDa heat shock protein ATPase homolog 2 (Ahsa2) from Mus musculus (Mouse).